A 160-amino-acid chain; its full sequence is UPF0225 protein PputW619_1140 (160 aa).

It belongs to the UPF0225 family.

The polypeptide is UPF0225 protein PputW619_1140 (Pseudomonas putida (strain W619)).